Here is a 423-residue protein sequence, read N- to C-terminus: Imidazolonepropionase (423 aa).

Fe(3+)-binding residues include His-91 and His-93. 2 residues coordinate Zn(2+): His-91 and His-93. Residues Arg-100, Tyr-163, and His-193 each contribute to the 4-imidazolone-5-propanoate site. Residue Tyr-163 participates in N-formimidoyl-L-glutamate binding. His-257 contacts Fe(3+). His-257 is a Zn(2+) binding site. Gln-260 is a 4-imidazolone-5-propanoate binding site. Asp-331 lines the Fe(3+) pocket. Asp-331 contacts Zn(2+). 2 residues coordinate N-formimidoyl-L-glutamate: Asn-333 and Gly-335. Thr-336 contacts 4-imidazolone-5-propanoate.

The protein belongs to the metallo-dependent hydrolases superfamily. HutI family. Zn(2+) serves as cofactor. It depends on Fe(3+) as a cofactor.

The protein resides in the cytoplasm. The enzyme catalyses 4-imidazolone-5-propanoate + H2O = N-formimidoyl-L-glutamate. Its pathway is amino-acid degradation; L-histidine degradation into L-glutamate; N-formimidoyl-L-glutamate from L-histidine: step 3/3. Its function is as follows. Catalyzes the hydrolytic cleavage of the carbon-nitrogen bond in imidazolone-5-propanoate to yield N-formimidoyl-L-glutamate. It is the third step in the universal histidine degradation pathway. The chain is Imidazolonepropionase from Bdellovibrio bacteriovorus (strain ATCC 15356 / DSM 50701 / NCIMB 9529 / HD100).